A 404-amino-acid polypeptide reads, in one-letter code: Argininosuccinate synthase (404 aa).

Residue 9 to 17 participates in ATP binding; that stretch reads AYSGGLDTS. L-citrulline is bound at residue Tyr86. Gly116 contributes to the ATP binding site. 3 residues coordinate L-aspartate: Thr118, Asn122, and Asp123. L-citrulline is bound at residue Asn122. Arg126, Ser174, Ser183, Glu259, and Tyr271 together coordinate L-citrulline.

The protein belongs to the argininosuccinate synthase family. Type 1 subfamily. In terms of assembly, homotetramer.

It localises to the cytoplasm. The catalysed reaction is L-citrulline + L-aspartate + ATP = 2-(N(omega)-L-arginino)succinate + AMP + diphosphate + H(+). The protein operates within amino-acid biosynthesis; L-arginine biosynthesis; L-arginine from L-ornithine and carbamoyl phosphate: step 2/3. In Listeria welshimeri serovar 6b (strain ATCC 35897 / DSM 20650 / CCUG 15529 / CIP 8149 / NCTC 11857 / SLCC 5334 / V8), this protein is Argininosuccinate synthase.